Consider the following 405-residue polypeptide: Tryptophan synthase beta chain (405 aa).

Lys-98 is subject to N6-(pyridoxal phosphate)lysine.

It belongs to the TrpB family. In terms of assembly, tetramer of two alpha and two beta chains. Pyridoxal 5'-phosphate is required as a cofactor.

The enzyme catalyses (1S,2R)-1-C-(indol-3-yl)glycerol 3-phosphate + L-serine = D-glyceraldehyde 3-phosphate + L-tryptophan + H2O. It functions in the pathway amino-acid biosynthesis; L-tryptophan biosynthesis; L-tryptophan from chorismate: step 5/5. Its function is as follows. The beta subunit is responsible for the synthesis of L-tryptophan from indole and L-serine. The polypeptide is Tryptophan synthase beta chain (Stenotrophomonas maltophilia (strain R551-3)).